The following is a 493-amino-acid chain: Anthranilate synthase component 1 (493 aa).

L-tryptophan contacts are provided by residues Ser48 and 273–275 (PYM). Residue 308–309 (GT) coordinates chorismate. Residue Glu335 participates in Mg(2+) binding. Chorismate contacts are provided by residues Tyr423, Arg443, 457 to 459 (GGG), and Gly459. A Mg(2+)-binding site is contributed by Glu472.

It belongs to the anthranilate synthase component I family. In terms of assembly, heterotetramer consisting of two non-identical subunits: a beta subunit (TrpG) and a large alpha subunit (TrpE). The cofactor is Mg(2+).

The enzyme catalyses chorismate + L-glutamine = anthranilate + pyruvate + L-glutamate + H(+). Its pathway is amino-acid biosynthesis; L-tryptophan biosynthesis; L-tryptophan from chorismate: step 1/5. Feedback inhibited by tryptophan. Functionally, part of a heterotetrameric complex that catalyzes the two-step biosynthesis of anthranilate, an intermediate in the biosynthesis of L-tryptophan. In the first step, the glutamine-binding beta subunit (TrpG) of anthranilate synthase (AS) provides the glutamine amidotransferase activity which generates ammonia as a substrate that, along with chorismate, is used in the second step, catalyzed by the large alpha subunit of AS (TrpE) to produce anthranilate. In the absence of TrpG, TrpE can synthesize anthranilate directly from chorismate and high concentrations of ammonia. This is Anthranilate synthase component 1 (trpE) from Pseudomonas putida (Arthrobacter siderocapsulatus).